We begin with the raw amino-acid sequence, 142 residues long: MIGHSTQEKIEKLVQSCGCNLYDLLLLKENERSILRLYITKEVGVSLDDCAMVSDLISPLLDVEDPLAGEYFLEVSSPGIERPLKRPAHYQHALGELARIKFADKNEIEGEIEAADETSVKLKGEEPIPYSLIKKAQTFYRW.

It belongs to the RimP family.

The protein localises to the cytoplasm. Required for maturation of 30S ribosomal subunits. The protein is Ribosome maturation factor RimP of Wolinella succinogenes (strain ATCC 29543 / DSM 1740 / CCUG 13145 / JCM 31913 / LMG 7466 / NCTC 11488 / FDC 602W) (Vibrio succinogenes).